The chain runs to 196 residues: O-methyltransferase dpmpI (196 aa).

S-adenosyl-L-methionine is bound by residues 127–128 (GG), Asp152, and 174–175 (SF). Residues 166–196 (NGIEAVPHSFEDPQPIKSKSPRLDNLARERL) form a disordered region. The segment covering 186-196 (PRLDNLARERL) has biased composition (basic and acidic residues).

The protein belongs to the class I-like SAM-binding methyltransferase superfamily. Cation-independent O-methyltransferase family.

The protein operates within secondary metabolite biosynthesis; terpenoid biosynthesis. In terms of biological role, O-methyltransferase; part of the gene cluster that mediates the biosynthesis of diterpenoid pyrones. The first step of the pathway is the synthesis of the alpha-pyrone moiety by the polyketide synthase dpmpA via condensation of one acetyl-CoA starter unit with 3 malonyl-CoA units and 2 methylations. The alpha-pyrone is then combined with geranylgeranyl pyrophosphate (GGPP) formed by the GGPP synthase dpmpD through the action of the prenyltransferase dpmpC to yield a linear alpha-pyrone diterpenoid. Subsequent steps in the diterpenoid pyrone biosynthetic pathway involve the decalin core formation, which is initiated by the epoxidation of the C10-C11 olefin by the FAD-dependent oxidoreductase dpmpE, and is followed by a cyclization cascade catalyzed by the terpene cyclase dpmpB. The short chain dehydrogenase/reductase dpmpG then oxidizes the 8S hydroxy group to a ketone and the short chain dehydrogenase/reductase dpmpH reduces the ketone to the 8R hydroxy group to yield higginsianin B. Higginsianin B is further methylated by the methyltransferase dpmpI to produce the intermediate named FDDP B. The cytochrome P450 monooxygenase dpmpJ then oxidizes the C-26 methyl to primary alcohol, producing the final diterpenoid pyrone with a C-26 primary alcohol on the gamma-pyrone moiety named FDDP C. The protein is O-methyltransferase dpmpI of Macrophomina phaseolina (strain MS6) (Charcoal rot fungus).